Here is a 176-residue protein sequence, read N- to C-terminus: ATP synthase subunit b (176 aa).

Residues 18 to 38 (GVEWGTVIVTVITFAILLALL) traverse the membrane as a helical segment.

Belongs to the ATPase B chain family. F-type ATPases have 2 components, F(1) - the catalytic core - and F(0) - the membrane proton channel. F(1) has five subunits: alpha(3), beta(3), gamma(1), delta(1), epsilon(1). F(0) has three main subunits: a(1), b(2) and c(10-14). The alpha and beta chains form an alternating ring which encloses part of the gamma chain. F(1) is attached to F(0) by a central stalk formed by the gamma and epsilon chains, while a peripheral stalk is formed by the delta and b chains.

The protein resides in the cell membrane. In terms of biological role, f(1)F(0) ATP synthase produces ATP from ADP in the presence of a proton or sodium gradient. F-type ATPases consist of two structural domains, F(1) containing the extramembraneous catalytic core and F(0) containing the membrane proton channel, linked together by a central stalk and a peripheral stalk. During catalysis, ATP synthesis in the catalytic domain of F(1) is coupled via a rotary mechanism of the central stalk subunits to proton translocation. Its function is as follows. Component of the F(0) channel, it forms part of the peripheral stalk, linking F(1) to F(0). This Staphylococcus haemolyticus (strain JCSC1435) protein is ATP synthase subunit b.